The following is a 345-amino-acid chain: Phosphoribosylformylglycinamidine cyclo-ligase (345 aa).

The protein belongs to the AIR synthase family.

The protein localises to the cytoplasm. It catalyses the reaction 2-formamido-N(1)-(5-O-phospho-beta-D-ribosyl)acetamidine + ATP = 5-amino-1-(5-phospho-beta-D-ribosyl)imidazole + ADP + phosphate + H(+). It functions in the pathway purine metabolism; IMP biosynthesis via de novo pathway; 5-amino-1-(5-phospho-D-ribosyl)imidazole from N(2)-formyl-N(1)-(5-phospho-D-ribosyl)glycinamide: step 2/2. The polypeptide is Phosphoribosylformylglycinamidine cyclo-ligase (Escherichia coli O139:H28 (strain E24377A / ETEC)).